Consider the following 423-residue polypeptide: Glutamyl-tRNA reductase (423 aa).

Residues 49–52 (TCNR), serine 111, 116–118 (EPQ), and glutamine 122 each bind substrate. Residue cysteine 50 is the Nucleophile of the active site. NADP(+) is bound at residue 191–196 (GAGEMS).

The protein belongs to the glutamyl-tRNA reductase family. In terms of assembly, homodimer.

The catalysed reaction is (S)-4-amino-5-oxopentanoate + tRNA(Glu) + NADP(+) = L-glutamyl-tRNA(Glu) + NADPH + H(+). It functions in the pathway porphyrin-containing compound metabolism; protoporphyrin-IX biosynthesis; 5-aminolevulinate from L-glutamyl-tRNA(Glu): step 1/2. Catalyzes the NADPH-dependent reduction of glutamyl-tRNA(Glu) to glutamate 1-semialdehyde (GSA). This Syntrophus aciditrophicus (strain SB) protein is Glutamyl-tRNA reductase.